Reading from the N-terminus, the 361-residue chain is 5-formaminoimidazole-4-carboxamide-1-(beta)-D-ribofuranosyl 5'-monophosphate synthetase (361 aa).

5-amino-1-(5-phospho-beta-D-ribosyl)imidazole-4-carboxamide contacts are provided by His-27 and Ser-94. One can recognise an ATP-grasp domain in the interval 116–348; sequence RAILRWEAER…MGQRIAKEIK (233 aa). ATP-binding positions include 146–208 and Glu-230; that span reads PDDI…ANYC. A 5-amino-1-(5-phospho-beta-D-ribosyl)imidazole-4-carboxamide-binding site is contributed by Asn-258. 2 residues coordinate Mg(2+): Gln-297 and Glu-310.

It belongs to the phosphohexose mutase family. Mg(2+) is required as a cofactor. The cofactor is Mn(2+).

The catalysed reaction is 5-amino-1-(5-phospho-beta-D-ribosyl)imidazole-4-carboxamide + formate + ATP = 5-formamido-1-(5-phospho-D-ribosyl)imidazole-4-carboxamide + ADP + phosphate. The protein operates within purine metabolism; IMP biosynthesis via de novo pathway; 5-formamido-1-(5-phospho-D-ribosyl)imidazole-4-carboxamide from 5-amino-1-(5-phospho-D-ribosyl)imidazole-4-carboxamide (formate route): step 1/1. Functionally, catalyzes the ATP- and formate-dependent formylation of 5-aminoimidazole-4-carboxamide-1-beta-d-ribofuranosyl 5'-monophosphate (AICAR) to 5-formaminoimidazole-4-carboxamide-1-beta-d-ribofuranosyl 5'-monophosphate (FAICAR) in the absence of folates. In Methanococcus maripaludis (strain C6 / ATCC BAA-1332), this protein is 5-formaminoimidazole-4-carboxamide-1-(beta)-D-ribofuranosyl 5'-monophosphate synthetase.